The primary structure comprises 201 residues: Large ribosomal subunit protein uL4 (201 aa).

The interval 44 to 68 (RAQKSRADVSGSGRKPWRQKGTGRA) is disordered.

This sequence belongs to the universal ribosomal protein uL4 family. In terms of assembly, part of the 50S ribosomal subunit.

One of the primary rRNA binding proteins, this protein initially binds near the 5'-end of the 23S rRNA. It is important during the early stages of 50S assembly. It makes multiple contacts with different domains of the 23S rRNA in the assembled 50S subunit and ribosome. Functionally, forms part of the polypeptide exit tunnel. In Buchnera aphidicola subsp. Schizaphis graminum (strain Sg), this protein is Large ribosomal subunit protein uL4.